Here is a 460-residue protein sequence, read N- to C-terminus: ATP synthase subunit beta (460 aa).

149–156 provides a ligand contact to ATP; it reads GGAGVGKT.

This sequence belongs to the ATPase alpha/beta chains family. F-type ATPases have 2 components, CF(1) - the catalytic core - and CF(0) - the membrane proton channel. CF(1) has five subunits: alpha(3), beta(3), gamma(1), delta(1), epsilon(1). CF(0) has three main subunits: a(1), b(2) and c(9-12). The alpha and beta chains form an alternating ring which encloses part of the gamma chain. CF(1) is attached to CF(0) by a central stalk formed by the gamma and epsilon chains, while a peripheral stalk is formed by the delta and b chains.

The protein localises to the cell inner membrane. The catalysed reaction is ATP + H2O + 4 H(+)(in) = ADP + phosphate + 5 H(+)(out). Functionally, produces ATP from ADP in the presence of a proton gradient across the membrane. The catalytic sites are hosted primarily by the beta subunits. This is ATP synthase subunit beta from Nitrosomonas europaea (strain ATCC 19718 / CIP 103999 / KCTC 2705 / NBRC 14298).